We begin with the raw amino-acid sequence, 119 residues long: Anther-specific protein BCP1 (119 aa).

Residues 1 to 23 form the signal peptide; it reads MGRQNVVVVFGLVFLAVLGLAAA. The segment covering 24-42 has biased composition (low complexity); it reads ASSPSPSASPSKAPSTSTP. Residues 24–95 form a disordered region; the sequence is ASSPSPSASP…PSGSADSADS (72 aa). Over 24–98 the chain is Extracellular; the sequence is ASSPSPSASP…SADSADSGAA (75 aa). Acidic residues predominate over residues 56-69; the sequence is TDDDAAASPGDDDV. Residues 82–95 are compositionally biased toward low complexity; sequence GSNGPSGSADSADS. A helical membrane pass occupies residues 99-118; that stretch reads ALGVSAVVVGVTSIVGSFLF. Phenylalanine 119 is a topological domain (cytoplasmic).

As to expression, expressed in mature pollen grains, developing microspores and tapetal cells.

It localises to the membrane. Required for pollen fertility and development. Active in both diploid tapetum and haploid microspores. Major pollen protein. This is Anther-specific protein BCP1 (BCP1) from Brassica campestris (Field mustard).